We begin with the raw amino-acid sequence, 552 residues long: Thermosome subunit beta (552 aa).

The segment at alanine 531–aspartate 552 is disordered. A compositionally biased stretch (basic and acidic residues) spans glycine 540–aspartate 552.

It belongs to the TCP-1 chaperonin family. In terms of assembly, forms a heterooligomeric complex of two stacked nine-membered rings; one of alpha and the other of beta subunits. Sometimes called a 'rosettasome'.

The protein resides in the cytoplasm. The catalysed reaction is ATP + H2O = ADP + phosphate + H(+). Molecular chaperone; binds unfolded polypeptides in vitro, stimulates protein folding and has ATPase activity. One of the most abundant proteins in the cell at all temperatures. The sequence is that of Thermosome subunit beta (thsB) from Saccharolobus shibatae (strain ATCC 51178 / DSM 5389 / JCM 8931 / NBRC 15437 / B12) (Sulfolobus shibatae).